The primary structure comprises 292 residues: Phosphatidylserine decarboxylase proenzyme (292 aa).

Active-site charge relay system; for autoendoproteolytic cleavage activity residues include aspartate 89, histidine 146, and serine 252. The active-site Schiff-base intermediate with substrate; via pyruvic acid; for decarboxylase activity is serine 252. At serine 252 the chain carries Pyruvic acid (Ser); by autocatalysis.

It belongs to the phosphatidylserine decarboxylase family. PSD-B subfamily. Prokaryotic type I sub-subfamily. Heterodimer of a large membrane-associated beta subunit and a small pyruvoyl-containing alpha subunit. Pyruvate serves as cofactor. Is synthesized initially as an inactive proenzyme. Formation of the active enzyme involves a self-maturation process in which the active site pyruvoyl group is generated from an internal serine residue via an autocatalytic post-translational modification. Two non-identical subunits are generated from the proenzyme in this reaction, and the pyruvate is formed at the N-terminus of the alpha chain, which is derived from the carboxyl end of the proenzyme. The autoendoproteolytic cleavage occurs by a canonical serine protease mechanism, in which the side chain hydroxyl group of the serine supplies its oxygen atom to form the C-terminus of the beta chain, while the remainder of the serine residue undergoes an oxidative deamination to produce ammonia and the pyruvoyl prosthetic group on the alpha chain. During this reaction, the Ser that is part of the protease active site of the proenzyme becomes the pyruvoyl prosthetic group, which constitutes an essential element of the active site of the mature decarboxylase.

The protein resides in the cell membrane. The catalysed reaction is a 1,2-diacyl-sn-glycero-3-phospho-L-serine + H(+) = a 1,2-diacyl-sn-glycero-3-phosphoethanolamine + CO2. It participates in phospholipid metabolism; phosphatidylethanolamine biosynthesis; phosphatidylethanolamine from CDP-diacylglycerol: step 2/2. In terms of biological role, catalyzes the formation of phosphatidylethanolamine (PtdEtn) from phosphatidylserine (PtdSer). The sequence is that of Phosphatidylserine decarboxylase proenzyme from Shewanella sp. (strain MR-7).